The sequence spans 252 residues: Ribosomal RNA large subunit methyltransferase E (252 aa).

S-adenosyl-L-methionine is bound by residues glycine 48, tryptophan 50, aspartate 68, aspartate 84, and aspartate 107. Lysine 147 serves as the catalytic Proton acceptor. The TRAM domain occupies 194–252 (PVREGDTLEVEIDNLGDEGDGVAKVDGYTLFVSGAEPGDAPEVRVTDVKPRFGFAETLE).

It belongs to the class I-like SAM-binding methyltransferase superfamily. RNA methyltransferase RlmE family.

It is found in the cytoplasm. The catalysed reaction is uridine(2552) in 23S rRNA + S-adenosyl-L-methionine = 2'-O-methyluridine(2552) in 23S rRNA + S-adenosyl-L-homocysteine + H(+). In terms of biological role, specifically methylates the uridine in position 2552 of 23S rRNA at the 2'-O position of the ribose in the fully assembled 50S ribosomal subunit. The sequence is that of Ribosomal RNA large subunit methyltransferase E from Natronomonas pharaonis (strain ATCC 35678 / DSM 2160 / CIP 103997 / JCM 8858 / NBRC 14720 / NCIMB 2260 / Gabara) (Halobacterium pharaonis).